The chain runs to 481 residues: UDP-glucose 6-dehydrogenase (481 aa).

Residues 16–21 (GAGYVG), aspartate 41, lysine 46, 94–98 (VNTPT), 135–136 (ST), and glutamate 172 each bind NAD(+). Substrate-binding positions include 168–172 (EFLAE), 227–231 (KLVAN), arginine 267, and 274–280 (QASVGFG). Cysteine 283 functions as the Nucleophile in the catalytic mechanism. 283-286 (CFQK) serves as a coordination point for NAD(+). Residue 345–346 (FK) coordinates substrate. Arginine 353 serves as a coordination point for NAD(+). Position 447 (arginine 447) interacts with substrate.

This sequence belongs to the UDP-glucose/GDP-mannose dehydrogenase family. Expressed in the vulva and in oocytes.

The catalysed reaction is UDP-alpha-D-glucose + 2 NAD(+) + H2O = UDP-alpha-D-glucuronate + 2 NADH + 3 H(+). The protein operates within nucleotide-sugar biosynthesis; UDP-alpha-D-glucuronate biosynthesis; UDP-alpha-D-glucuronate from UDP-alpha-D-glucose: step 1/1. Functionally, involved in the biosynthesis of glycosaminoglycans; hyaluronan, chondroitin sulfate, and heparan sulfate. The polypeptide is UDP-glucose 6-dehydrogenase (sqv-4) (Caenorhabditis elegans).